We begin with the raw amino-acid sequence, 458 residues long: O-acetyltransferase dmxR13 (458 aa).

The tract at residues 211–231 (ELARQISQPRPPPSSDGPPPP) is disordered. Over residues 219-231 (PRPPPSSDGPPPP) the composition is skewed to pro residues.

Belongs to the trichothecene 3-O-acetyltransferase family.

The protein operates within secondary metabolite biosynthesis. Its function is as follows. O-acetyltransferase; part of the gene cluster that mediates the biosynthesis of the dimeric xanthones cryptosporioptides. The pathway begins with the synthesis of atrochrysone thioester by the polyketide synthase dmx-nrPKS. The atrochrysone carboxyl ACP thioesterase dmxR1 then breaks the thioester bond and releases the atrochrysone carboxylic acid from dmx-nrPKS. Atrochrysone carboxylic acid is decarboxylated by the decarboxylase dmxR15, and oxidized by the anthrone oxygenase dmxR16 to yield emodin. Emodin is then reduced to emodin hydroquinone by the oxidoreductase dmxR7. A-ring reduction by the short chain dehydrogenase dmxR18, dehydration by the scytalone dehydratase-like protein dmxR17 and probable spontaneous re-oxidation, results in overall deoxygenation to chrysophanol. Baeyer-Villiger oxidation by the Baeyer-Villiger monooxygenase (BVMO) dmxR6 then yields monodictylactone in equilibrium with monodictyphenone. In the case of the cryptosporioptides biosynthesis, monodictylactone is reduced at C-12 to an alcohol (by the short chain dehydrogenases dmxR12 or dmxR8) and hydroxylated at C-5 by dmxR9, yielding the electron-rich aromatic which could eliminate H(2)O to form the ortho-quinonemethide, followed by tautomerisation to paraquinone and complete the formal reduction to produce the 10-methylgroup. Conjugate addition of C-4a-OH to the resulting paraquinone by the monooxygenase dmxR10 then gives cyclohexadienone, which is then reduced at C-5 by the short chain dehydrogenase dmxR3 to give the dihydroxanthone. The 6,7-epoxide in the cryptosporioptides could be introduced by the cytochrome P450 monooxygenase dmxL3. The highly reducing PKS dmxL2 manufactures butyrate, which is further carboxylated by dmxL1 to form ethylmalonate. It is not yet clear whether the carboxylation occurs while the butyrate is attached to the ACP of dmxL2, but this unusual fungal metabolite could then be esterified to O-5 by the O-acetyltransferase dmxR13. Finally, dimerization performed by dmxR5 gives the observed dimers cryptosporioptides A, B and C as the final products of the pathway. The sequence is that of O-acetyltransferase dmxR13 from Cryptosporiopsis sp. (strain 8999).